Here is a 207-residue protein sequence, read N- to C-terminus: Large ribosomal subunit protein uL4 (207 aa).

The segment at 49–78 is disordered; sequence HAVKNRSAVSGGGRKPWRQKGTGRARQGSI.

It belongs to the universal ribosomal protein uL4 family. In terms of assembly, part of the 50S ribosomal subunit.

One of the primary rRNA binding proteins, this protein initially binds near the 5'-end of the 23S rRNA. It is important during the early stages of 50S assembly. It makes multiple contacts with different domains of the 23S rRNA in the assembled 50S subunit and ribosome. Its function is as follows. Forms part of the polypeptide exit tunnel. The polypeptide is Large ribosomal subunit protein uL4 (Streptococcus suis (strain 98HAH33)).